Here is a 442-residue protein sequence, read N- to C-terminus: Probable carboxypeptidase PAAG_00768 (442 aa).

The signal sequence occupies residues 1 to 20 (MKLQYLVALLFVQAVPPVTA). A glycan (N-linked (GlcNAc...) asparagine) is linked at N102. D160 serves as a coordination point for Zn(2+). The active-site Proton acceptor is E192. Residue E193 participates in Zn(2+) binding. N343 carries an N-linked (GlcNAc...) asparagine glycan.

This sequence belongs to the peptidase M20A family. Requires Zn(2+) as cofactor.

Its subcellular location is the secreted. The sequence is that of Probable carboxypeptidase PAAG_00768 from Paracoccidioides lutzii (strain ATCC MYA-826 / Pb01) (Paracoccidioides brasiliensis).